A 447-amino-acid chain; its full sequence is MKPVIALVGRPNVGKSTLFNRMTRSRDALVADLPGLTRDRHYGEGRIGERPFIAIDTGGFEPVVKEGIVAEMAKQTKQAVVEADVVIFIVDGRLGLAPQDRAIADYLRKTGRRIMLAVNKAEGMKYTSVAADFYELGMGDPYAISAAHGDGVRELVDEAIELAVQERPELAEEASDEGKGVKIAIVGRPNVGKSTLVNTLIGEERVIAFDMPGTTRDAIYVEFERGGKPYTLIDTAGLRRRGKVFEAIEKFSVVKTLQSIADANVVILLLDAQQDISDQDAHIAGFIVESGRALVVGVNKWDGLDGHTRDRIKHDLERKLQFLSFANFHFVSARERTGIGALMRSVDDAYAAAMVKLPTPQLTRVLQEAVEFQQPKRVGASRPKLRYAHQGGSNPPIIVIHGNALSGVAETYRRYLENRFRAAFKLKGTPLRIEFRTNKNPYADSKD.

2 EngA-type G domains span residues proline 3–arginine 167 and valine 181–methionine 354. Residues glycine 9–serine 16, aspartate 56–phenylalanine 60, asparagine 119–glutamate 122, glycine 187–serine 194, aspartate 234–leucine 238, and asparagine 299–aspartate 302 each bind GTP. The KH-like domain maps to valine 355–lysine 439.

The protein belongs to the TRAFAC class TrmE-Era-EngA-EngB-Septin-like GTPase superfamily. EngA (Der) GTPase family. In terms of assembly, associates with the 50S ribosomal subunit.

GTPase that plays an essential role in the late steps of ribosome biogenesis. The protein is GTPase Der of Cupriavidus taiwanensis (strain DSM 17343 / BCRC 17206 / CCUG 44338 / CIP 107171 / LMG 19424 / R1) (Ralstonia taiwanensis (strain LMG 19424)).